Here is a 378-residue protein sequence, read N- to C-terminus: Cytochrome b (378 aa).

4 helical membrane passes run 34-54 (FGSL…FLAM), 78-99 (WLLR…YLHV), 114-134 (WLIG…GYVL), and 179-199 (FFTF…IHLL). 2 residues coordinate heme b: His84 and His98. Residues His183 and His197 each coordinate heme b. Residue His202 participates in a ubiquinone binding. 4 consecutive transmembrane segments (helical) span residues 227-247 (FKDI…VLIS), 289-309 (LGGV…PFYN), 321-341 (INQV…WIGA), and 348-368 (YVLI…VNPL).

This sequence belongs to the cytochrome b family. In terms of assembly, the main subunits of complex b-c1 are: cytochrome b, cytochrome c1 and the Rieske protein. Heme b serves as cofactor.

It is found in the mitochondrion inner membrane. Functionally, component of the ubiquinol-cytochrome c reductase complex (complex III or cytochrome b-c1 complex) that is part of the mitochondrial respiratory chain. The b-c1 complex mediates electron transfer from ubiquinol to cytochrome c. Contributes to the generation of a proton gradient across the mitochondrial membrane that is then used for ATP synthesis. The protein is Cytochrome b (mt:Cyt-b) of Drosophila sechellia (Fruit fly).